Consider the following 409-residue polypeptide: NADH-quinone oxidoreductase subunit D (409 aa).

It belongs to the complex I 49 kDa subunit family. In terms of assembly, NDH-1 is composed of 14 different subunits. Subunits NuoB, C, D, E, F, and G constitute the peripheral sector of the complex.

It localises to the cell inner membrane. The enzyme catalyses a quinone + NADH + 5 H(+)(in) = a quinol + NAD(+) + 4 H(+)(out). Functionally, NDH-1 shuttles electrons from NADH, via FMN and iron-sulfur (Fe-S) centers, to quinones in the respiratory chain. The immediate electron acceptor for the enzyme in this species is believed to be ubiquinone. Couples the redox reaction to proton translocation (for every two electrons transferred, four hydrogen ions are translocated across the cytoplasmic membrane), and thus conserves the redox energy in a proton gradient. The protein is NADH-quinone oxidoreductase subunit D of Sulfurovum sp. (strain NBC37-1).